The chain runs to 370 residues: L-lysine 4-hydroxylase (370 aa).

Fe cation contacts are provided by H176, E178, and H310.

Belongs to the clavaminate synthase family. Fe(2+) serves as cofactor.

The catalysed reaction is L-lysine + 2-oxoglutarate + O2 = (4R)-4-hydroxy-L-lysine + succinate + CO2. In terms of biological role, alpha-ketoglutarate-dependent dioxygenase that in vitro catalyzes the regio- and stereoselective hydroxylation of L-lysine, leading to (4R)-4-hydroxy-L-lysine. To a lesser extent, can also use (3S)-3-hydroxy-L-lysine as substrate, producing the dihydroxylated product (3R,4R)-3,4-hydroxy-L-lysine. Cannot use D-lysine or L-ornithine as substrate. The protein is L-lysine 4-hydroxylase of Flavobacterium johnsoniae (strain ATCC 17061 / DSM 2064 / JCM 8514 / BCRC 14874 / CCUG 350202 / NBRC 14942 / NCIMB 11054 / UW101) (Cytophaga johnsonae).